We begin with the raw amino-acid sequence, 30 residues long: Varv peptide B (30 aa).

Residues 1–30 (GLPVCGETCFGGTCNTPGCSCDPWPMCSRN) constitute a cross-link (cyclopeptide (Gly-Asn)). 3 disulfide bridges follow: Cys5/Cys19, Cys9/Cys21, and Cys14/Cys27.

Post-translationally, this is a cyclic peptide.

Probably participates in a plant defense mechanism. This chain is Varv peptide B, found in Viola arvensis (European field pansy).